Reading from the N-terminus, the 209-residue chain is MGAILGKKIGMTRLYNEKREAVPCTIIQAGPCFVTQVKSAGIDGYDAYQVGIGERKEAKVTKPMLGHYKKAGVAPGYMTAEFDTSMFDGELTAGSPVLVESFTEGEIVKVQGVSKGKGFAGVVKRHNFGGGQRTHGQSDRLRAPGSIGGASDPSKTFKGTKMGGRMGSDTITVRNLQVIKIMPESSLIMVKGSVPGPKNSYVRIVSTKK.

Positions 127–166 (NFGGGQRTHGQSDRLRAPGSIGGASDPSKTFKGTKMGGRM) are disordered.

It belongs to the universal ribosomal protein uL3 family. Part of the 50S ribosomal subunit. Forms a cluster with proteins L14 and L19.

Its function is as follows. One of the primary rRNA binding proteins, it binds directly near the 3'-end of the 23S rRNA, where it nucleates assembly of the 50S subunit. This Chlorobium phaeovibrioides (strain DSM 265 / 1930) (Prosthecochloris vibrioformis (strain DSM 265)) protein is Large ribosomal subunit protein uL3.